We begin with the raw amino-acid sequence, 734 residues long: Platelet glycoprotein Ib alpha chain (734 aa).

The first 16 residues, 1–16, serve as a signal peptide directing secretion; the sequence is MALLILLFLLPSPLHS. Positions 17–47 constitute an LRRNT domain; the sequence is QHTCSISKVTSLLEVNCENKKLTALPADLPA. The Extracellular portion of the chain corresponds to 17-612; the sequence is QHTCSISKVT…LNSDFCCFLP (596 aa). Cys20 and Cys33 form a disulfide bridge. LRR repeat units follow at residues 48-69, 72-93, 94-115, 117-140, 141-162, 165-188, and 189-210; these read DTGI…SLVH, HLTY…GKLI, KLEN…GWAL, ALTT…DGLS, QLQE…LLLP, KLKK…DGLE, and DLDT…FFGT. Positions 221-282 constitute an LRRCT domain; sequence NSWYCDCEIL…YSYPGKGCPT (62 aa). 2 disulfides stabilise this stretch: Cys225/Cys264 and Cys227/Cys280. Tyr292 carries the post-translational modification Sulfotyrosine. Residues Thr301, Thr311, Thr315, and Thr316 are each glycosylated (O-linked (GalNAc...) threonine). Ser335 carries an O-linked (GalNAc...) serine glycan. Residues Thr339, Thr348, Thr358, and Thr377 are each glycosylated (O-linked (GalNAc...) threonine). Residue Ser382 is glycosylated (O-linked (GalNAc...) serine). O-linked (GalNAc...) threonine glycosylation is found at Thr384, Thr385, and Thr405. Disordered regions lie at residues 406–429 and 460–526; these read STLT…TPEH and EPST…PEPS. Residues Thr512, Thr516, Thr519, Thr530, Thr542, Thr546, Thr550, and Thr562 are each glycosylated (O-linked (GalNAc...) threonine). A glycan (O-linked (GalNAc...) serine) is linked at Ser572. Thr573 is a glycosylation site (O-linked (GalNAc...) threonine). Residues 613 to 633 form a helical membrane-spanning segment; sequence LGFYVLGLLWLLFASVVLILL. At 634 to 734 the chain is on the cytoplasmic side; that stretch reads LTWTWHVTPH…VGIRYSGHSL (101 aa). 2 positions are modified to phosphoserine: Ser711 and Ser714.

Two GP-Ib beta are disulfide-linked to one GP-Ib alpha. GP-IX is complexed with the GP-Ib heterodimer via a non covalent linkage. Interacts with FLNB. Interacts with FLNA (via filamin repeats 4, 9, 12, 17, 19, 21, and 23). Post-translationally, O-glycosylated. In terms of processing, glycocalicin is the product of a proteolytic cleavage/shedding, catalyzed by ADAM17, which releases most of the extracellular domain. Binding sites for vWF and thrombin are in this part of the protein.

It is found in the membrane. Functionally, GP-Ib, a surface membrane protein of platelets, participates in the formation of platelet plugs by binding to the A1 domain of vWF, which is already bound to the subendothelium. This is Platelet glycoprotein Ib alpha chain (Gp1ba) from Mus musculus (Mouse).